The sequence spans 69 residues: Conotoxin Eb6.19 (69 aa).

Residues 1–17 form the signal peptide; that stretch reads VLIIAVLFLTACQLTTA. The propeptide occupies 18-41; the sequence is ETYSRGRQKHRARRSTDKNSKWTR. Intrachain disulfides connect cysteine 43–cysteine 57, cysteine 50–cysteine 61, and cysteine 56–cysteine 68.

The protein belongs to the conotoxin O1 superfamily. Expressed by the venom duct.

It is found in the secreted. The chain is Conotoxin Eb6.19 (E1) from Conus ebraeus (Hebrew cone).